The sequence spans 1001 residues: Ribonuclease E/G-like protein, chloroplastic (1001 aa).

Residues 1–48 (MDVTEVPWRRLPQFSVSSRASWLVSSGFPLSSYMFSHVERGKTFRLTL) constitute a chloroplast transit peptide. Residues 76 to 185 (SRLKGLCEVV…KIIIRDSWMS (110 aa)) enclose the CBM20 domain. A Mg(2+)-binding site is contributed by D755. A coiled-coil region spans residues 769–789 (QEKAILEVNLAAARQIAREIR). D800 lines the Mg(2+) pocket. Positions 858 and 861 each coordinate Zn(2+).

This sequence belongs to the RNase E/G family. As to quaternary structure, part of a chloroplastic degradosome-like complex. Interacts with RHON1. A homotetramer formed by a dimer of dimers. Mg(2+) serves as cofactor. Zn(2+) is required as a cofactor. Expressed in cotyledons, rosette and cauline leaves.

Its subcellular location is the plastid. It localises to the chloroplast stroma. Functionally, involved in intercistronic processing of primary transcripts from chloroplast operons. The endonucleolytic activity of the enzyme depends on the number of phosphates at the 5' end, is inhibited by structured RNA, and preferentially cleaves A/U-rich sequences. In Arabidopsis thaliana (Mouse-ear cress), this protein is Ribonuclease E/G-like protein, chloroplastic (RNE).